Consider the following 375-residue polypeptide: Succinyl-diaminopimelate desuccinylase (375 aa).

His66 serves as a coordination point for Zn(2+). The active site involves Asp68. Asp99 is a binding site for Zn(2+). The Proton acceptor role is filled by Glu133. Residues Glu134, Glu162, and His348 each contribute to the Zn(2+) site.

It belongs to the peptidase M20A family. DapE subfamily. In terms of assembly, homodimer. Requires Zn(2+) as cofactor. Co(2+) serves as cofactor.

The catalysed reaction is N-succinyl-(2S,6S)-2,6-diaminopimelate + H2O = (2S,6S)-2,6-diaminopimelate + succinate. The protein operates within amino-acid biosynthesis; L-lysine biosynthesis via DAP pathway; LL-2,6-diaminopimelate from (S)-tetrahydrodipicolinate (succinylase route): step 3/3. Catalyzes the hydrolysis of N-succinyl-L,L-diaminopimelic acid (SDAP), forming succinate and LL-2,6-diaminopimelate (DAP), an intermediate involved in the bacterial biosynthesis of lysine and meso-diaminopimelic acid, an essential component of bacterial cell walls. The protein is Succinyl-diaminopimelate desuccinylase of Aeromonas salmonicida (strain A449).